The primary structure comprises 324 residues: IDS-like terpene synthase 3 (324 aa).

Asp-77 and Asp-81 together coordinate Mg(2+).

The protein belongs to the FPP/GGPP synthase family. Mg(2+) serves as cofactor.

It catalyses the reaction (2E)-geranyl diphosphate + H2O = linalool + diphosphate. The catalysed reaction is (2E,6E)-farnesyl diphosphate + H2O = (6E)-nerolidol + diphosphate. Functionally, terpene synthase that shows monoterpene synthase activity and produces linalool, using geranyl diphosphate (GPP) as substrate. Also shows sesquiterpene synthase activity as it is able to convert farnesyl diphosphate (FPP) into (E)-nerolidol. This Melampsora lini (Rust fungus) protein is IDS-like terpene synthase 3.